Here is a 402-residue protein sequence, read N- to C-terminus: Meiosis-specific cyclin rem1 (402 aa).

Belongs to the cyclin family. Cyclin AB subfamily.

In terms of biological role, required for pre-meiotic DNA synthesis and S phase progression. Regulates levels of meiotic intragenic recombination. This chain is Meiosis-specific cyclin rem1 (rem1), found in Schizosaccharomyces pombe (strain 972 / ATCC 24843) (Fission yeast).